The sequence spans 1142 residues: Serine/threonine-protein kinase GIN4 (1142 aa).

A Protein kinase domain is found at 19-289; the sequence is WKLGETLGLG…TRDILKHPLL (271 aa). ATP is bound by residues 25–33 and Lys-48; that span reads LGLGSTGKV. The active-site Proton acceptor is the Asp-156. 2 disordered regions span residues 378–412 and 425–469; these read KKRQ…SVTS and ASSA…RNKR. A compositionally biased stretch (low complexity) spans 382–395; the sequence is SISSVSVSPSKKVS. Ser-406 is subject to Phosphoserine. The segment covering 425 to 440 has biased composition (low complexity); that stretch reads ASSASSSNLTTPGSSK. Positions 441-452 are enriched in basic residues; it reads RLSKNFSSKKKL. Over residues 454-465 the composition is skewed to polar residues; it reads TIVNQSSPTPAS. Residues Ser-465, Ser-471, Ser-617, Ser-689, Ser-719, Ser-805, Ser-807, and Ser-883 each carry the phosphoserine modification. Residues 676-698 form a disordered region; it reads DPGIMFSSPTEEVSPVEPKRTEN. Thr-884 carries the phosphothreonine modification. Positions 903–1031 are disordered; it reads NEAKQTDNLH…NTAIGNGSFF (129 aa). Basic and acidic residues-rich tracts occupy residues 923–937, 962–984, and 996–1021; these read NELR…DQAH, KEEK…KVVD, and KIRE…KQDK. At Ser-930 the chain carries Phosphoserine.

This sequence belongs to the protein kinase superfamily. CAMK Ser/Thr protein kinase family. NIM1 subfamily. Component of the GIN4 complex composed of at least BNI5, CDC3, CDC10, CDC11, CDC12, GIN4, NAP1 and SHS1 which forms a ring at the bud neck.

It localises to the cytoplasm. It is found in the bud neck. The enzyme catalyses L-seryl-[protein] + ATP = O-phospho-L-seryl-[protein] + ADP + H(+). It carries out the reaction L-threonyl-[protein] + ATP = O-phospho-L-threonyl-[protein] + ADP + H(+). Functionally, serine/threonine-protein kinase which regulates the localization and the function of the septins during mitosis. Phosphorylates SHS1. This Saccharomyces cerevisiae (strain ATCC 204508 / S288c) (Baker's yeast) protein is Serine/threonine-protein kinase GIN4 (GIN4).